A 312-amino-acid chain; its full sequence is Malate dehydrogenase (312 aa).

NAD(+) contacts are provided by residues 7–13 (GAAGGIG) and Asp34. The substrate site is built by Arg81 and Arg87. NAD(+) contacts are provided by residues Asn94 and 117–119 (ITN). Residues Asn119 and Arg153 each coordinate substrate. The active-site Proton acceptor is the His177. Met227 is an NAD(+) binding site.

This sequence belongs to the LDH/MDH superfamily. MDH type 1 family. As to quaternary structure, homodimer.

It carries out the reaction (S)-malate + NAD(+) = oxaloacetate + NADH + H(+). Catalyzes the reversible oxidation of malate to oxaloacetate. The chain is Malate dehydrogenase from Salmonella arizonae (strain ATCC BAA-731 / CDC346-86 / RSK2980).